Here is a 211-residue protein sequence, read N- to C-terminus: Uridine kinase (211 aa).

12–19 (GGTGSGKT) serves as a coordination point for ATP.

It belongs to the uridine kinase family.

The protein resides in the cytoplasm. It carries out the reaction uridine + ATP = UMP + ADP + H(+). The enzyme catalyses cytidine + ATP = CMP + ADP + H(+). It participates in pyrimidine metabolism; CTP biosynthesis via salvage pathway; CTP from cytidine: step 1/3. It functions in the pathway pyrimidine metabolism; UMP biosynthesis via salvage pathway; UMP from uridine: step 1/1. In Halalkalibacterium halodurans (strain ATCC BAA-125 / DSM 18197 / FERM 7344 / JCM 9153 / C-125) (Bacillus halodurans), this protein is Uridine kinase.